Here is a 334-residue protein sequence, read N- to C-terminus: MKPRVMILLGSASDFRIAEKAMEIFEELRIPYDLRVASAHRTHEKVKAIVSEAVKAGVEVFIGIAGLSAHLPGMISANTHRPVIGVPVDVKLGGLDALFACSQMPFPAPVATVGVDRGENAAILAAQIIGIGDPGVRERVADLRRGFYERVRRDECQVLNSIEGSYYAPLEVEMPPIGDKVPSDSQDDPMVSVIPGSYSDMKIAKKTTMFLERMGISYDLNVISPIRYPERFERYLEKMENVKLFIAISGLSAHVTGAVVALSDRPVIGVPCPLKMNGWDSLLSMINMPPGVPVGTVGVGNGGNAAILAAEMLGIYDEKIESRIKRIKSRSVKF.

Substrate contacts are provided by serine 11, aspartate 14, and arginine 41.

It belongs to the AIR carboxylase family. Class I subfamily.

The catalysed reaction is 5-carboxyamino-1-(5-phospho-D-ribosyl)imidazole + H(+) = 5-amino-1-(5-phospho-D-ribosyl)imidazole-4-carboxylate. The protein operates within purine metabolism; IMP biosynthesis via de novo pathway; 5-amino-1-(5-phospho-D-ribosyl)imidazole-4-carboxylate from 5-amino-1-(5-phospho-D-ribosyl)imidazole (N5-CAIR route): step 2/2. Its function is as follows. Catalyzes the conversion of N5-carboxyaminoimidazole ribonucleotide (N5-CAIR) to 4-carboxy-5-aminoimidazole ribonucleotide (CAIR). This Methanothermobacter thermautotrophicus (strain ATCC 29096 / DSM 1053 / JCM 10044 / NBRC 100330 / Delta H) (Methanobacterium thermoautotrophicum) protein is Probable N5-carboxyaminoimidazole ribonucleotide mutase.